The chain runs to 1240 residues: Phospholipid-transporting ATPase 6 (1240 aa).

The Cytoplasmic segment spans residues 1 to 75 (MARRRIRSRI…TTRYNLLTFL (75 aa)). A helical membrane pass occupies residues 76 to 97 (PKCLYEQFHRVANFYFLVAAIL). Residues 98–101 (SVFP) lie on the Extracellular side of the membrane. A helical transmembrane segment spans residues 102–124 (LSPFNKWSMIAPLVFVVGLSMGK). The Cytoplasmic segment spans residues 125 to 306 (EALEDWRRFM…SRIEKRMDYI (182 aa)). Residues 307–328 (IYTLFALLLTVSFISSLGFAVM) form a helical membrane-spanning segment. The Extracellular segment spans residues 329–360 (TKLLMAEWWYLRPDKPESLTNPTNPLYAWVVH). The helical transmembrane segment at 361-378 (LITALLLYGYLIPISLYV) threads the bilayer. Residues 379–943 (SIEVVKVLQA…HGHWCYKRIA (565 aa)) are Cytoplasmic-facing. The active-site 4-aspartylphosphate intermediate is Asp426. A Glycyl lysine isopeptide (Lys-Gly) (interchain with G-Cter in ubiquitin) cross-link involves residue Lys625. 2 residues coordinate Mg(2+): Asp888 and Asp892. The chain crosses the membrane as a helical span at residues 944-963 (QMICYFFYKNITFGLTLFYF). The Extracellular segment spans residues 964–977 (ECFTGFSGQSIYND). A helical transmembrane segment spans residues 978-997 (SYLLLFNVVLTSLPVISLGV). Residues 998–1027 (FEQDVPSDVCLQFPALYQQGPKNLFFDWYR) are Cytoplasmic-facing. Residues 1028–1050 (ILGWMGNGVYASIVIFTLNLGIF) traverse the membrane as a helical segment. The Extracellular segment spans residues 1051 to 1063 (HVQSFRSDGQTAD). Residues 1064–1086 (MNAMGTAMFTCIIWAVNVQIALT) form a helical membrane-spanning segment. Topologically, residues 1087–1092 (MSHFTW) are cytoplasmic. The chain crosses the membrane as a helical span at residues 1093–1113 (IQHVMIWGSIGAWYVFLALYG). Residues 1114–1130 (MLPVKLSGNIFHMLVEI) are Extracellular-facing. A helical membrane pass occupies residues 1131 to 1155 (LAPAPIFWLTSLLVIAATTLPYLFH). Topologically, residues 1156–1240 (ISYQRSVNPL…SNDTPSSNSQ (85 aa)) are cytoplasmic.

This sequence belongs to the cation transport ATPase (P-type) (TC 3.A.3) family. Type IV subfamily.

The protein localises to the cell membrane. The protein resides in the endomembrane system. It carries out the reaction ATP + H2O + phospholipidSide 1 = ADP + phosphate + phospholipidSide 2.. Functionally, involved in transport of phospholipids and in regulation of pollen plasma membrane lipid asymmetry. This Arabidopsis thaliana (Mouse-ear cress) protein is Phospholipid-transporting ATPase 6.